The following is a 318-amino-acid chain: Olfactory receptor 2T34 (318 aa).

Over 1-30 (MCSGNQTSQNQTASTDFTLTGLFAESKHAA) the chain is Extracellular. Residues N5 and N10 are each glycosylated (N-linked (GlcNAc...) asparagine). The helical transmembrane segment at 31 to 54 (LLYTVTFLLFLMALTGNALLILLI) threads the bilayer. At 55-62 (HSEPRLHT) the chain is on the cytoplasmic side. The helical transmembrane segment at 63–84 (PMYFFISQLALMDLMYLCVTVP) threads the bilayer. Topologically, residues 85 to 105 (KMLVGQVTGDDTISPSGCGIQ) are extracellular. Residues C102 and C194 are joined by a disulfide bond. A helical transmembrane segment spans residues 106–125 (MFFHLTLAGAEVFLLAAMAY). The Cytoplasmic segment spans residues 126–144 (DRYAAVCRPLHYPLLMNQR). The helical transmembrane segment at 145 to 163 (VCQLLVSACWVLGMVDGLL) threads the bilayer. Over 164-200 (LTPITMSFPFCQSRKILSFFCETPALLKLSCSDVSLY) the chain is Extracellular. A helical transmembrane segment spans residues 201-224 (KMLTYLCCILMLLTPIMVISSSYT). The Cytoplasmic portion of the chain corresponds to 225 to 241 (LILHLIHRMNSAAGRRK). A helical membrane pass occupies residues 242–264 (ALATCSSHMIIVLLLFGASFYTY). Residues 265–277 (MLRSSYHTAEQDM) are Extracellular-facing. A helical membrane pass occupies residues 278–297 (MVSAFYTIFTPVLNPLIYSL). At 298–318 (RNKDVTRALRSMMQSRMNQEK) the chain is on the cytoplasmic side.

It belongs to the G-protein coupled receptor 1 family.

The protein localises to the cell membrane. Its function is as follows. Odorant receptor. This is Olfactory receptor 2T34 (OR2T34) from Homo sapiens (Human).